A 138-amino-acid chain; its full sequence is Abscisic stress-ripening protein 5 (138 aa).

The segment covering 1 to 13 has biased composition (basic residues); sequence MAEEKHHHHLFHH. Disordered regions lie at residues 1–27 and 106–138; these read MAEEKHHHHLFHHKKDDEPATGVDSYG and GAGGYAFHEHHEKKKDHKSAEESTGEKKHHLFG.

The protein belongs to the abscisic acid and water stress-induced protein family.

Its subcellular location is the nucleus. It localises to the cytoplasm. Its function is as follows. Involved in tolerance to aluminum. Regulates the expression of different genes that collectively contribute to the protection of the cell in response to aluminum stress. The polypeptide is Abscisic stress-ripening protein 5 (Oryza sativa subsp. indica (Rice)).